The chain runs to 276 residues: Ribosomal RNA small subunit methyltransferase A (276 aa).

Residues Asn-27, Leu-29, Gly-54, Glu-75, Asp-101, and Asn-123 each contribute to the S-adenosyl-L-methionine site.

The protein belongs to the class I-like SAM-binding methyltransferase superfamily. rRNA adenine N(6)-methyltransferase family. RsmA subfamily.

It localises to the cytoplasm. The catalysed reaction is adenosine(1518)/adenosine(1519) in 16S rRNA + 4 S-adenosyl-L-methionine = N(6)-dimethyladenosine(1518)/N(6)-dimethyladenosine(1519) in 16S rRNA + 4 S-adenosyl-L-homocysteine + 4 H(+). Functionally, specifically dimethylates two adjacent adenosines (A1518 and A1519) in the loop of a conserved hairpin near the 3'-end of 16S rRNA in the 30S particle. May play a critical role in biogenesis of 30S subunits. The sequence is that of Ribosomal RNA small subunit methyltransferase A from Bartonella bacilliformis (strain ATCC 35685 / KC583 / Herrer 020/F12,63).